A 74-amino-acid chain; its full sequence is Small ribosomal subunit protein eS28 (74 aa).

Belongs to the eukaryotic ribosomal protein eS28 family.

This is Small ribosomal subunit protein eS28 from Halorubrum lacusprofundi (strain ATCC 49239 / DSM 5036 / JCM 8891 / ACAM 34).